The primary structure comprises 380 residues: Lipid-A-disaccharide synthase (380 aa).

The protein belongs to the LpxB family.

It catalyses the reaction a lipid X + a UDP-2-N,3-O-bis[(3R)-3-hydroxyacyl]-alpha-D-glucosamine = a lipid A disaccharide + UDP + H(+). It functions in the pathway bacterial outer membrane biogenesis; LPS lipid A biosynthesis. Functionally, condensation of UDP-2,3-diacylglucosamine and 2,3-diacylglucosamine-1-phosphate to form lipid A disaccharide, a precursor of lipid A, a phosphorylated glycolipid that anchors the lipopolysaccharide to the outer membrane of the cell. This is Lipid-A-disaccharide synthase from Francisella philomiragia subsp. philomiragia (strain ATCC 25017 / CCUG 19701 / FSC 153 / O#319-036).